Reading from the N-terminus, the 158-residue chain is Developmental pluripotency-associated protein 3 (158 aa).

2 disordered regions span residues 1–38 (MDEP…EILQ) and 54–78 (SAKP…VENR). Residues 26 to 35 (DEGDSPDDSE) are compositionally biased toward acidic residues. Positions 58–68 (TKYHRRQRVRL) are enriched in basic residues.

Its subcellular location is the nucleus. It is found in the cytoplasm. Primordial germ cell (PGCs)-specific protein involved in epigenetic chromatin reprogramming in the zygote following fertilization. In zygotes, DNA demethylation occurs selectively in the paternal pronucleus before the first cell division, while the adjacent maternal pronucleus and certain paternally-imprinted loci are protected from this process. Participates in protection of DNA methylation in the maternal pronucleus by preventing conversion of 5mC to 5hmC: specifically recognizes and binds histone H3 dimethylated at 'Lys-9' (H3K9me2) on maternal genome, and protects maternal genome from TET3-mediated conversion to 5hmC and subsequent DNA demethylation. Does not bind paternal chromatin, which is mainly packed into protamine and does not contain much H3K9me2 mark. Also protects imprinted loci that are marked with H3K9me2 in mature sperm from DNA demethylation in early embryogenesis. May be important for the totipotent/pluripotent states continuing through preimplantation development. Also involved in chromatin condensation in oocytogenesis. This Rattus norvegicus (Rat) protein is Developmental pluripotency-associated protein 3 (Dppa3).